Here is an 86-residue protein sequence, read N- to C-terminus: Toxin Tpa6 (86 aa).

An N-terminal signal peptide occupies residues 1 to 20; it reads MSIFPIALALLLIGLEEGEA. An LCN-type CS-alpha/beta domain is found at 22 to 85; the sequence is RDGYPLSKNN…WGDPGTKPCM (64 aa). 4 disulfide bridges follow: Cys33–Cys84, Cys37–Cys58, Cys43–Cys64, and Cys47–Cys66.

Belongs to the long (4 C-C) scorpion toxin superfamily. Sodium channel inhibitor family. Beta subfamily. In terms of tissue distribution, expressed by the venom gland.

The protein resides in the secreted. Beta toxins bind voltage-independently at site-4 of sodium channels (Nav) and shift the voltage of activation toward more negative potentials thereby affecting sodium channel activation and promoting spontaneous and repetitive firing. This Tityus pachyurus (Colombian scorpion) protein is Toxin Tpa6.